Consider the following 296-residue polypeptide: Bifunctional protein FolD 1 (296 aa).

NADP(+) contacts are provided by residues Gly167–Gly169 and Ile235.

Belongs to the tetrahydrofolate dehydrogenase/cyclohydrolase family. As to quaternary structure, homodimer.

The enzyme catalyses (6R)-5,10-methylene-5,6,7,8-tetrahydrofolate + NADP(+) = (6R)-5,10-methenyltetrahydrofolate + NADPH. It carries out the reaction (6R)-5,10-methenyltetrahydrofolate + H2O = (6R)-10-formyltetrahydrofolate + H(+). It participates in one-carbon metabolism; tetrahydrofolate interconversion. Catalyzes the oxidation of 5,10-methylenetetrahydrofolate to 5,10-methenyltetrahydrofolate and then the hydrolysis of 5,10-methenyltetrahydrofolate to 10-formyltetrahydrofolate. The protein is Bifunctional protein FolD 1 of Nocardioides sp. (strain ATCC BAA-499 / JS614).